The sequence spans 373 residues: 8-amino-7-oxononanoate synthase (373 aa).

Residue arginine 16 participates in substrate binding. Position 93 to 94 (glycine 93 to phenylalanine 94) interacts with pyridoxal 5'-phosphate. Histidine 118 provides a ligand contact to substrate. Pyridoxal 5'-phosphate-binding positions include serine 165, aspartate 190 to histidine 193, and threonine 222 to lysine 225. Position 225 is an N6-(pyridoxal phosphate)lysine (lysine 225). Position 334 (threonine 334) interacts with substrate.

Belongs to the class-II pyridoxal-phosphate-dependent aminotransferase family. BioF subfamily. Homodimer. It depends on pyridoxal 5'-phosphate as a cofactor.

It carries out the reaction 6-carboxyhexanoyl-[ACP] + L-alanine + H(+) = (8S)-8-amino-7-oxononanoate + holo-[ACP] + CO2. It participates in cofactor biosynthesis; biotin biosynthesis. Functionally, catalyzes the decarboxylative condensation of pimeloyl-[acyl-carrier protein] and L-alanine to produce 8-amino-7-oxononanoate (AON), [acyl-carrier protein], and carbon dioxide. This Helicobacter pylori (strain J99 / ATCC 700824) (Campylobacter pylori J99) protein is 8-amino-7-oxononanoate synthase.